Here is a 436-residue protein sequence, read N- to C-terminus: Serine--tRNA ligase (436 aa).

242 to 244 (TAE) contributes to the L-serine binding site. Residue 273–275 (RSE) participates in ATP binding. Glu296 provides a ligand contact to L-serine. 360 to 363 (EISS) contributes to the ATP binding site. Ser395 serves as a coordination point for L-serine.

Belongs to the class-II aminoacyl-tRNA synthetase family. Type-1 seryl-tRNA synthetase subfamily. Homodimer. The tRNA molecule binds across the dimer.

It is found in the cytoplasm. It carries out the reaction tRNA(Ser) + L-serine + ATP = L-seryl-tRNA(Ser) + AMP + diphosphate + H(+). It catalyses the reaction tRNA(Sec) + L-serine + ATP = L-seryl-tRNA(Sec) + AMP + diphosphate + H(+). It participates in aminoacyl-tRNA biosynthesis; selenocysteinyl-tRNA(Sec) biosynthesis; L-seryl-tRNA(Sec) from L-serine and tRNA(Sec): step 1/1. Functionally, catalyzes the attachment of serine to tRNA(Ser). Is also able to aminoacylate tRNA(Sec) with serine, to form the misacylated tRNA L-seryl-tRNA(Sec), which will be further converted into selenocysteinyl-tRNA(Sec). The sequence is that of Serine--tRNA ligase from Polynucleobacter asymbioticus (strain DSM 18221 / CIP 109841 / QLW-P1DMWA-1) (Polynucleobacter necessarius subsp. asymbioticus).